We begin with the raw amino-acid sequence, 160 residues long: Large ribosomal subunit protein eL14 (160 aa).

The interval 136-160 is disordered; that stretch reads SDGTPRILKKDRRERLRAEKAKAKK. Basic and acidic residues predominate over residues 146 to 160; it reads DRRERLRAEKAKAKK.

The protein belongs to the eukaryotic ribosomal protein eL14 family.

This chain is Large ribosomal subunit protein eL14 (RpL14), found in Drosophila virilis (Fruit fly).